The sequence spans 329 residues: Transposable element Tc3 transposase (329 aa).

Residues Pro2 to Thr135 mediate DNA binding.

It belongs to the transposase 5 family. In terms of assembly, homodimer or homotetramer.

Its subcellular location is the nucleus. Binds specifically to the terminal nucleotides of the TC3 inverted repeat. Its expression results in frequent excision and transposition of endogenous TC3 elements. TC3 transposase acts by making double strand breaks at the ends of TC3 element. The excised element would then be inserted into a target sequence. In Caenorhabditis elegans, this protein is Transposable element Tc3 transposase (tc3a).